The chain runs to 341 residues: N-acetyl-gamma-glutamyl-phosphate reductase 2 (341 aa).

Cys146 is an active-site residue.

The protein belongs to the NAGSA dehydrogenase family. Type 1 subfamily.

It localises to the cytoplasm. The enzyme catalyses N-acetyl-L-glutamate 5-semialdehyde + phosphate + NADP(+) = N-acetyl-L-glutamyl 5-phosphate + NADPH + H(+). It participates in amino-acid biosynthesis; L-arginine biosynthesis; N(2)-acetyl-L-ornithine from L-glutamate: step 3/4. Functionally, catalyzes the NADPH-dependent reduction of N-acetyl-5-glutamyl phosphate to yield N-acetyl-L-glutamate 5-semialdehyde. In Lactiplantibacillus plantarum (strain ATCC BAA-793 / NCIMB 8826 / WCFS1) (Lactobacillus plantarum), this protein is N-acetyl-gamma-glutamyl-phosphate reductase 2.